The sequence spans 107 residues: Ig kappa chain V-VI region NQ2-48.2.2 (107 aa).

The tract at residues Q1 to C23 is framework-1. A disulfide bridge links C23 with C87. The tract at residues S24–H33 is complementarity-determining-1. The interval W34–Y48 is framework-2. The segment at D49–S55 is complementarity-determining-2. Residues G56 to C87 form a framework-3 region. The tract at residues Q88–T96 is complementarity-determining-3. The framework-4 stretch occupies residues F97–K106.

Its function is as follows. Anti-2-phenyl oxazolone (PHOX) Antibody. The polypeptide is Ig kappa chain V-VI region NQ2-48.2.2 (Mus musculus (Mouse)).